A 347-amino-acid polypeptide reads, in one-letter code: CD5 antigen-like (347 aa).

The signal sequence occupies residues 1–19 (MALLFSLILAICTRPGFLA). SRCR domains follow at residues 24-125 (VRLV…ASCE), 138-239 (VRLA…VECE), and 244-346 (LRLV…VICS). 11 cysteine pairs are disulfide-bonded: cysteine 33–cysteine 67, cysteine 49–cysteine 114, cysteine 62–cysteine 124, cysteine 96–cysteine 106, cysteine 163–cysteine 228, cysteine 176–cysteine 238, cysteine 208–cysteine 218, cysteine 253–cysteine 287, cysteine 269–cysteine 335, cysteine 282–cysteine 345, and cysteine 315–cysteine 325.

Interacts with FASN; the interaction is direct. Interacts (via SRCR2 and SRCR3) with pentameric IgM (via Fc region); disulfide-linked. Post-translationally, not N-glycosylated. Probably not O-glycosylated. As to expression, expressed in spleen, lymph node, thymus, bone marrow, and fetal liver, but not in non-lymphoid tissues.

It localises to the secreted. The protein localises to the cytoplasm. Secreted protein that acts as a key regulator of lipid synthesis: mainly expressed by macrophages in lymphoid and inflamed tissues and regulates mechanisms in inflammatory responses, such as infection or atherosclerosis. Able to inhibit lipid droplet size in adipocytes. Following incorporation into mature adipocytes via CD36-mediated endocytosis, associates with cytosolic FASN, inhibiting fatty acid synthase activity and leading to lipolysis, the degradation of triacylglycerols into glycerol and free fatty acids (FFA). CD5L-induced lipolysis occurs with progression of obesity: participates in obesity-associated inflammation following recruitment of inflammatory macrophages into adipose tissues, a cause of insulin resistance and obesity-related metabolic disease. Regulation of intracellular lipids mediated by CD5L has a direct effect on transcription regulation mediated by nuclear receptors ROR-gamma (RORC). Acts as a key regulator of metabolic switch in T-helper Th17 cells. Regulates the expression of pro-inflammatory genes in Th17 cells by altering the lipid content and limiting synthesis of cholesterol ligand of RORC, the master transcription factor of Th17-cell differentiation. CD5L is mainly present in non-pathogenic Th17 cells, where it decreases the content of polyunsaturated fatty acyls (PUFA), affecting two metabolic proteins MSMO1 and CYP51A1, which synthesize ligands of RORC, limiting RORC activity and expression of pro-inflammatory genes. Participates in obesity-associated autoimmunity via its association with IgM, interfering with the binding of IgM to Fcalpha/mu receptor and enhancing the development of long-lived plasma cells that produce high-affinity IgG autoantibodies. Also acts as an inhibitor of apoptosis in macrophages: promotes macrophage survival from the apoptotic effects of oxidized lipids in case of atherosclerosis. Involved in early response to microbial infection against various pathogens by acting as a pattern recognition receptor and by promoting autophagy. In Homo sapiens (Human), this protein is CD5 antigen-like (CD5L).